A 426-amino-acid chain; its full sequence is Dihydropyrimidine dehydrogenase (NADP(+)), chloroplastic (426 aa).

Residues 1–44 (MASMSFALNRFSGLSSKTTLSADFDPSSRRSFLPPTRVGLKISS) constitute a chloroplast transit peptide. At A45 the chain carries N-acetylalanine. Residues N129 and 188–190 (NFS) contribute to the substrate site. The active-site Nucleophile is C191. 256 to 257 (NT) provides a ligand contact to substrate. Residues 395 to 414 (VEQRKAEKRGLKSDKDWTGD) form a disordered region.

This sequence belongs to the dihydropyrimidine dehydrogenase family. In terms of tissue distribution, expressed in roots, leaves, stems, siliques and flowers. Highly expressed ion dry seeds.

The protein localises to the plastid. The protein resides in the chloroplast. The enzyme catalyses 5,6-dihydrouracil + NADP(+) = uracil + NADPH + H(+). Its pathway is amino-acid biosynthesis; beta-alanine biosynthesis. Its function is as follows. Involved in pyrimidine base degradation. Catalyzes the reduction of uracil to 5,6-dihydrouracil (DHU) by using NADH as a specific cosubstrate and the reduction of thymine to 5,6-dihydrothymine (DHT). Involved in the recycling of nitrogen from nucleobases to general nitrogen metabolism. This chain is Dihydropyrimidine dehydrogenase (NADP(+)), chloroplastic, found in Arabidopsis thaliana (Mouse-ear cress).